Reading from the N-terminus, the 513-residue chain is uncharacterized protein (513 aa).

Belongs to the NodU/CmcH family.

This is an uncharacterized protein from Methanocaldococcus jannaschii (strain ATCC 43067 / DSM 2661 / JAL-1 / JCM 10045 / NBRC 100440) (Methanococcus jannaschii).